Consider the following 195-residue polypeptide: Protein GrpE (195 aa).

Over residues 1-18 (MDPKEKKTKQEEELKVDD) the composition is skewed to basic and acidic residues. A disordered region spans residues 1–41 (MDPKEKKTKQEEELKVDDIQDTVEGQSQNEEATEATEPLTA).

The protein belongs to the GrpE family. Homodimer.

It localises to the cytoplasm. In terms of biological role, participates actively in the response to hyperosmotic and heat shock by preventing the aggregation of stress-denatured proteins, in association with DnaK and GrpE. It is the nucleotide exchange factor for DnaK and may function as a thermosensor. Unfolded proteins bind initially to DnaJ; upon interaction with the DnaJ-bound protein, DnaK hydrolyzes its bound ATP, resulting in the formation of a stable complex. GrpE releases ADP from DnaK; ATP binding to DnaK triggers the release of the substrate protein, thus completing the reaction cycle. Several rounds of ATP-dependent interactions between DnaJ, DnaK and GrpE are required for fully efficient folding. This Bacteroides fragilis (strain ATCC 25285 / DSM 2151 / CCUG 4856 / JCM 11019 / LMG 10263 / NCTC 9343 / Onslow / VPI 2553 / EN-2) protein is Protein GrpE.